Here is a 215-residue protein sequence, read N- to C-terminus: UPF0502 protein YceH (215 aa).

Residue lysine 80 is modified to N6-acetyllysine.

The protein belongs to the UPF0502 family.

This chain is UPF0502 protein YceH, found in Escherichia coli O81 (strain ED1a).